Consider the following 454-residue polypeptide: Tryptophanase (454 aa).

Residue Lys256 is modified to N6-(pyridoxal phosphate)lysine.

The protein belongs to the beta-eliminating lyase family. As to quaternary structure, homotetramer. The cofactor is pyridoxal 5'-phosphate.

It carries out the reaction L-tryptophan + H2O = indole + pyruvate + NH4(+). Its pathway is amino-acid degradation; L-tryptophan degradation via pyruvate pathway; indole and pyruvate from L-tryptophan: step 1/1. This chain is Tryptophanase, found in Hyphomonas neptunium (strain ATCC 15444).